A 22-amino-acid chain; its full sequence is Polydim-I (22 aa).

In terms of tissue distribution, expressed by the venom gland.

The protein resides in the secreted. Its function is as follows. Antibacterial peptide. Acts on the Mycobacterium abscessus subsp. massiliense cell wall. Reduces 40-50% of the bacterial load in macrophages infected with different M.abscessus strains. Is not cytotoxic towards mammalian cells, and shows no hemolytic activity against human erythrocytes. In vivo, reduces the bacterial load in the lungs, spleen, and liver of highly susceptible mice intravenously infected with M.abscessus. In Polybia dimorpha (Neotropical wasp), this protein is Polydim-I.